A 373-amino-acid chain; its full sequence is DNA replication and repair protein RecF (373 aa).

30–37 is an ATP binding site; sequence GPNGQGKT.

Belongs to the RecF family.

It is found in the cytoplasm. The RecF protein is involved in DNA metabolism; it is required for DNA replication and normal SOS inducibility. RecF binds preferentially to single-stranded, linear DNA. It also seems to bind ATP. This is DNA replication and repair protein RecF from Streptomyces avermitilis (strain ATCC 31267 / DSM 46492 / JCM 5070 / NBRC 14893 / NCIMB 12804 / NRRL 8165 / MA-4680).